The primary structure comprises 422 residues: UDP-N-acetylglucosamine 1-carboxyvinyltransferase (422 aa).

22-23 provides a ligand contact to phosphoenolpyruvate; it reads KN. Arginine 93 lines the UDP-N-acetyl-alpha-D-glucosamine pocket. Catalysis depends on cysteine 117, which acts as the Proton donor. 2-(S-cysteinyl)pyruvic acid O-phosphothioketal is present on cysteine 117. UDP-N-acetyl-alpha-D-glucosamine contacts are provided by residues 122–126, aspartate 305, and isoleucine 327; that span reads RPVDQ.

The protein belongs to the EPSP synthase family. MurA subfamily.

It localises to the cytoplasm. It catalyses the reaction phosphoenolpyruvate + UDP-N-acetyl-alpha-D-glucosamine = UDP-N-acetyl-3-O-(1-carboxyvinyl)-alpha-D-glucosamine + phosphate. Its pathway is cell wall biogenesis; peptidoglycan biosynthesis. Functionally, cell wall formation. Adds enolpyruvyl to UDP-N-acetylglucosamine. The protein is UDP-N-acetylglucosamine 1-carboxyvinyltransferase of Bordetella parapertussis (strain 12822 / ATCC BAA-587 / NCTC 13253).